We begin with the raw amino-acid sequence, 643 residues long: 1-deoxy-D-xylulose-5-phosphate synthase (643 aa).

Residues His72 and 113-115 (GHA) contribute to the thiamine diphosphate site. Asp144 lines the Mg(2+) pocket. Thiamine diphosphate is bound by residues 145 to 146 (GA), Asn174, Tyr287, and Glu370. Asn174 is a binding site for Mg(2+).

The protein belongs to the transketolase family. DXPS subfamily. Homodimer. Requires Mg(2+) as cofactor. Thiamine diphosphate is required as a cofactor.

The catalysed reaction is D-glyceraldehyde 3-phosphate + pyruvate + H(+) = 1-deoxy-D-xylulose 5-phosphate + CO2. It participates in metabolic intermediate biosynthesis; 1-deoxy-D-xylulose 5-phosphate biosynthesis; 1-deoxy-D-xylulose 5-phosphate from D-glyceraldehyde 3-phosphate and pyruvate: step 1/1. Catalyzes the acyloin condensation reaction between C atoms 2 and 3 of pyruvate and glyceraldehyde 3-phosphate to yield 1-deoxy-D-xylulose-5-phosphate (DXP). This chain is 1-deoxy-D-xylulose-5-phosphate synthase, found in Parasynechococcus marenigrum (strain WH8102).